A 266-amino-acid polypeptide reads, in one-letter code: Glioma pathogenesis-related protein 1 (266 aa).

The signal sequence occupies residues 1–21 (MRVTLATIAWMVSFVSNYSHT). The 138-residue stretch at 38 to 175 (VRIHNKFRSE…SNGAHFICNY (138 aa)) folds into the SCP domain. A helical membrane pass occupies residues 233–255 (YTSLFLIVNSVILILSVIITILV).

Belongs to the CRISP family. According to PubMed:8973356, it is ubiquitously expressed with high levels in lung and kidney and low levels in heart and liver. Highly expressed in cell lines derived from nervous system tumors arising from glia, low or absent in non-glial-derived nervous system tumor cell lines. Also found in fetal kidney. According to PubMed:7607567 it is expressed only in brain tumor glioblastoma multiforme/astrocytoma and not in other nervous system tumors or normal fetal or adult tissues.

The protein resides in the membrane. The polypeptide is Glioma pathogenesis-related protein 1 (GLIPR1) (Homo sapiens (Human)).